Here is an 86-residue protein sequence, read N- to C-terminus: Protein Tat (86 aa).

The disordered stretch occupies residues 1–21 (MDPVDPNIEPWNHPGSQPKTA). Positions 1–24 (MDPVDPNIEPWNHPGSQPKTACNR) are interaction with human CREBBP. Residues 1 to 48 (MDPVDPNIEPWNHPGSQPKTACNRCHCKKCCYHCQVCFITKGLGISYG) form a transactivation region. Residues Cys-22, Cys-25, and Cys-27 each contribute to the Zn(2+) site. The interval 22–37 (CNRCHCKKCCYHCQVC) is cysteine-rich. An N6-acetyllysine; by host PCAF modification is found at Lys-28. 4 residues coordinate Zn(2+): Cys-30, His-33, Cys-34, and Cys-37. The segment at 38 to 48 (FITKGLGISYG) is core. The tract at residues 47–86 (YGRKKRRQRRRPSQGGQTHQDPIPKQPSSQPRGDPTGPKE) is disordered. Over residues 48–58 (GRKKRRQRRRP) the composition is skewed to basic residues. Positions 49 to 57 (RKKRRQRRR) match the Nuclear localization signal, RNA-binding (TAR), and protein transduction motif. The interaction with the host capping enzyme RNGTT stretch occupies residues 49-86 (RKKRRQRRRPSQGGQTHQDPIPKQPSSQPRGDPTGPKE). 2 positions are modified to N6-acetyllysine; by host EP300 and GCN5L2: Lys-50 and Lys-51. 2 positions are modified to asymmetric dimethylarginine; by host PRMT6: Arg-52 and Arg-53. The segment covering 60 to 77 (QGGQTHQDPIPKQPSSQP) has biased composition (polar residues). Lys-71 is covalently cross-linked (Glycyl lysine isopeptide (Lys-Gly) (interchain with G-Cter in ubiquitin)). The Cell attachment site motif lies at 78 to 80 (RGD).

Belongs to the lentiviruses Tat family. As to quaternary structure, interacts with host CCNT1. Associates with the P-TEFb complex composed at least of Tat, P-TEFb (CDK9 and CCNT1), TAR RNA, RNA Pol II. Recruits the HATs CREBBP, TAF1/TFIID, EP300, PCAF and GCN5L2. Interacts with host KAT5/Tip60; this interaction targets the latter to degradation. Interacts with the host deacetylase SIRT1. Interacts with host capping enzyme RNGTT; this interaction stimulates RNGTT. Binds to host KDR, and to the host integrins ITGAV/ITGB3 and ITGA5/ITGB1. Interacts with host KPNB1/importin beta-1 without previous binding to KPNA1/importin alpha-1. Interacts with EIF2AK2. Interacts with host nucleosome assembly protein NAP1L1; this interaction may be required for the transport of Tat within the nucleus, since the two proteins interact at the nuclear rim. Interacts with host C1QBP/SF2P32; this interaction involves lysine-acetylated Tat. Interacts with the host chemokine receptors CCR2, CCR3 and CXCR4. Interacts with host DPP4/CD26; this interaction may trigger an anti-proliferative effect. Interacts with host LDLR. Interacts with the host extracellular matrix metalloproteinase MMP1. Interacts with host PRMT6; this interaction mediates Tat's methylation. Interacts with, and is ubiquitinated by MDM2/Hdm2. Interacts with host PSMC3 and HTATIP2. Interacts with STAB1; this interaction may overcome SATB1-mediated repression of IL2 and IL2RA (interleukin) in T cells by binding to the same domain than HDAC1. Interacts (when acetylated) with human CDK13, thereby increasing HIV-1 mRNA splicing and promoting the production of the doubly spliced HIV-1 protein Nef. Interacts with host TBP; this interaction modulates the activity of transcriptional pre-initiation complex. Interacts with host RELA. Interacts with host PLSCR1; this interaction negatively regulates Tat transactivation activity by altering its subcellular distribution. Asymmetrical arginine methylation by host PRMT6 seems to diminish the transactivation capacity of Tat and affects the interaction with host CCNT1. Post-translationally, acetylation by EP300, CREBBP, GCN5L2/GCN5 and PCAF regulates the transactivation activity of Tat. EP300-mediated acetylation of Lys-50 promotes dissociation of Tat from the TAR RNA through the competitive binding to PCAF's bromodomain. In addition, the non-acetylated Tat's N-terminus can also interact with PCAF. PCAF-mediated acetylation of Lys-28 enhances Tat's binding to CCNT1. Lys-50 is deacetylated by SIRT1. In terms of processing, polyubiquitination by host MDM2 does not target Tat to degradation, but activates its transactivation function and fosters interaction with CCNT1 and TAR RNA. Phosphorylated by EIF2AK2 on serine and threonine residues adjacent to the basic region important for TAR RNA binding and function. Phosphorylation of Tat by EIF2AK2 is dependent on the prior activation of EIF2AK2 by dsRNA.

It is found in the host nucleus. It localises to the host nucleolus. The protein localises to the host cytoplasm. The protein resides in the secreted. In terms of biological role, transcriptional activator that increases RNA Pol II processivity, thereby increasing the level of full-length viral transcripts. Recognizes a hairpin structure at the 5'-LTR of the nascent viral mRNAs referred to as the transactivation responsive RNA element (TAR) and recruits the cyclin T1-CDK9 complex (P-TEFb complex) that will in turn hyperphosphorylate the RNA polymerase II to allow efficient elongation. The CDK9 component of P-TEFb and other Tat-activated kinases hyperphosphorylate the C-terminus of RNA Pol II that becomes stabilized and much more processive. Other factors such as HTATSF1/Tat-SF1, SUPT5H/SPT5, and HTATIP2 are also important for Tat's function. Besides its effect on RNA Pol II processivity, Tat induces chromatin remodeling of proviral genes by recruiting the histone acetyltransferases (HATs) CREBBP, EP300 and PCAF to the chromatin. This also contributes to the increase in proviral transcription rate, especially when the provirus integrates in transcriptionally silent region of the host genome. To ensure maximal activation of the LTR, Tat mediates nuclear translocation of NF-kappa-B by interacting with host RELA. Through its interaction with host TBP, Tat may also modulate transcription initiation. Tat can reactivate a latently infected cell by penetrating in it and transactivating its LTR promoter. In the cytoplasm, Tat is thought to act as a translational activator of HIV-1 mRNAs. Extracellular circulating Tat can be endocytosed by surrounding uninfected cells via the binding to several surface receptors such as CD26, CXCR4, heparan sulfate proteoglycans (HSPG) or LDLR. Neurons are rarely infected, but they internalize Tat via their LDLR. Through its interaction with nuclear HATs, Tat is potentially able to control the acetylation-dependent cellular gene expression. Modulates the expression of many cellular genes involved in cell survival, proliferation or in coding for cytokines or cytokine receptors. Tat plays a role in T-cell and neurons apoptosis. Tat induced neurotoxicity and apoptosis probably contribute to neuroAIDS. Circulating Tat also acts as a chemokine-like and/or growth factor-like molecule that binds to specific receptors on the surface of the cells, affecting many cellular pathways. In the vascular system, Tat binds to ITGAV/ITGB3 and ITGA5/ITGB1 integrins dimers at the surface of endothelial cells and competes with bFGF for heparin-binding sites, leading to an excess of soluble bFGF. The chain is Protein Tat from Human immunodeficiency virus type 1 group M subtype D (isolate Z2/CDC-Z34) (HIV-1).